We begin with the raw amino-acid sequence, 198 residues long: Inner membrane-spanning protein YciB (198 aa).

5 consecutive transmembrane segments (helical) span residues 36–56, 67–87, 90–110, 133–153, and 162–182; these read IFSATAMLIISSVVVYGILYI, LTLVACLVFGSLTLAFHSETF, WKAPVVNWLFAVAFAGSHFIG, LNIAWIIFFLFCGAANLYVAF, and FKVFGSLGMTLIFLVGQGIYL.

The protein belongs to the YciB family.

It localises to the cell inner membrane. Functionally, plays a role in cell envelope biogenesis, maintenance of cell envelope integrity and membrane homeostasis. This is Inner membrane-spanning protein YciB from Pseudomonas syringae pv. tomato (strain ATCC BAA-871 / DC3000).